The following is a 166-amino-acid chain: NADH-quinone oxidoreductase subunit E (166 aa).

The [2Fe-2S] cluster site is built by cysteine 92, cysteine 97, cysteine 133, and cysteine 137.

The protein belongs to the complex I 24 kDa subunit family. In terms of assembly, composed of 13 different subunits. Subunits NuoCD, E, F, and G constitute the peripheral sector of the complex. Requires [2Fe-2S] cluster as cofactor.

It carries out the reaction a quinone + NADH + 5 H(+)(in) = a quinol + NAD(+) + 4 H(+)(out). NDH-1 shuttles electrons from NADH, via FMN and iron-sulfur (Fe-S) centers, to quinones in the respiratory chain. The immediate electron acceptor for the enzyme in this species is believed to be ubiquinone. Couples the redox reaction to proton translocation (for every two electrons transferred, four hydrogen ions are translocated across the cytoplasmic membrane), and thus conserves the redox energy in a proton gradient. The sequence is that of NADH-quinone oxidoreductase subunit E (nuoE) from Salmonella typhi.